The sequence spans 407 residues: Peptidase T (407 aa).

His81 provides a ligand contact to Zn(2+). Asp83 is a catalytic residue. A Zn(2+)-binding site is contributed by Asp142. The Proton acceptor role is filled by Glu176. 3 residues coordinate Zn(2+): Glu177, Asp199, and His381.

It belongs to the peptidase M20B family. It depends on Zn(2+) as a cofactor.

Its subcellular location is the cytoplasm. The enzyme catalyses Release of the N-terminal residue from a tripeptide.. Functionally, cleaves the N-terminal amino acid of tripeptides. The polypeptide is Peptidase T (Streptococcus pneumoniae (strain P1031)).